Here is a 1234-residue protein sequence, read N- to C-terminus: Anion exchange protein 2 (1234 aa).

Residues 1-239 form a disordered region; sequence MSSAPRRPAS…YNLQERRRIG (239 aa). Residues 1–704 are Cytoplasmic-facing; it reads MSSAPRRPAS…SDFRDALDPQ (704 aa). Basic and acidic residues-rich tracts occupy residues 39-49 and 58-75; these read LRTLGVERFEE and GGEE…EYHR. Basic residues-rich tracts occupy residues 76-85 and 94-110; these read QSSHHIHHPL and RRRK…RRRP. S113 bears the Phosphoserine mark. Acidic residues predominate over residues 120–133; that stretch reads TIEEGEEDEDEVGE. A phosphoserine mark is found at S145, S171, and S173. Positions 207–216 are enriched in gly residues; it reads TAGGDDGGAA. Position 240 is a phosphoserine (S240). T254 carries the post-translational modification Phosphothreonine. Position 271 is an N6-methyllysine (K271). A disordered region spans residues 287–315; it reads RKNAKGSTQAAREGREPGPTPRARPRAPH. Phosphoserine is present on S440. Residues 446–467 are disordered; the sequence is SLLGHHHAQGTESDPHVTEPLI. 4 helical membrane passes run 705–728, 734–771, 791–813, and 823–843; these read CLAA…GLLG, LIGV…LLVF, VWIG…SFLV, and IFAF…LIKI. Residues 705-1234 form a membrane (anion exchange) region; the sequence is CLAAVIFIYF…DEYNEMPMPV (530 aa). Over 844-893 the chain is Extracellular; sequence FQEHPLHGCSVSNDSEADSSSNNMTWAATTLAPDNSSASGQERPRGQPNT. Residues N856, N866, and N878 are each glycosylated (N-linked (GlcNAc...) asparagine). The helical transmembrane segment at 894-911 threads the bilayer; sequence ALLSLVLMAGTFFIAFFL. Topologically, residues 912–926 are cytoplasmic; it reads RKFKNSRFFPGRIRR. 5 helical membrane passes run 927–947, 981–1003, 1029–1050, 1084–1129, and 1156–1192; these read VIGD…DYSI, PFPV…LIFM, LLLI…LAAA, VTGL…IQFY, and MHLF…TVPL. C1166 carries S-palmitoyl cysteine lipidation.

Belongs to the anion exchanger (TC 2.A.31) family. Expressed in the parotid and submandibular glands (at protein level). Expressed in the gastric mucosa (at protein level). Expressed in the choroid plexus epithelium (at protein level). Expressed in the liver and gallbladder.

It is found in the apical cell membrane. Its subcellular location is the basolateral cell membrane. The enzyme catalyses hydrogencarbonate(in) + chloride(out) = hydrogencarbonate(out) + chloride(in). Its activity is regulated as follows. Inhibited by 4,4'-diisothiocyanatostilbene-2,2'-disulfonic acid (DIDS). In terms of biological role, sodium-independent anion exchanger which mediates the electroneutral exchange of chloride for bicarbonate ions across the cell membrane. Plays an important role in osteoclast differentiation and function. Regulates bone resorption and calpain-dependent actin cytoskeleton organization in osteoclasts via anion exchange-dependent control of pH. Essential for intracellular pH regulation in CD8(+) T-cells upon CD3 stimulation, modulating CD8(+) T-cell responses. This is Anion exchange protein 2 (Slc4a2) from Rattus norvegicus (Rat).